The sequence spans 1004 residues: MAALHTTPDSPAAQLERAEDGSECDPDQEEEEEEEEKGEEVQEVEEEEEEIVVEEEEEGVAEVVQDAQVEAVAEVEVEADVEEEDVKEVLAEEECPALGTQERLSRGGDAKSPVLQEKGLQASRAPATPRDEDLEEEEEEEEDEDEDDLLTAGCQELVTFEDVAVYFSLEEWERLEADQRGLYQEVMQENYGILVSLGYPIPKPDLIFRLEQGEEPWVPDSPRPEEGDIVTGVYTGAWFWTDDIEDHEEEDDEDFLAEVAEEENEPPGLWSAAYGVGDVPGTWGPDDSDSAQTPEGWGPDPGGLGVLADGSEAKPFLPGREPGANLLSPWAFPAAVAPPAGRPETTCDVCGKVFPHRSRLAKHQRYHAAVKPFGCEECGKGFVYRSHLAIHQRTHTGEKPFPCPDCGKRFVYKSHLVTHRRIHTGERPYRCAFCGAGFGRRSYLVTHQRTHTGERPYPCSHCGRSFSQSSALARHQAVHTADRPHCCPDCGQAFRLRADFQRHRRGGGCAEAGGDGPRREPGETAAAAGPEDTDPGPEGSEVGEADGEAEAAAEEREEAAVAAPTPSGKVDPAPERRFLELGNGLGEGEGPSSHPLGFHFPVHPKSWLHPDSFPILGLPDFRERLPVDGRPLPAPLGGPLSLVEGTGLACDPFGGGGAAGGGGGLRAFGPAIGGLLAEPAPAALAEEESPWICSDCGKTFGRRAALAKHQRYHAGERPHRCADCGKSFVYGSHLARHRRTHTGERPFPCPECGARFARGSHLAAHVRGHTGEKPFVCGVCGAGFSRRAHLTAHGRAHTGERPYACGECGRRFGQSAALTRHQWAHAEEKPHRCPDCGKGFGHSSDFKRHRRTHTGEKPFRCADCGRGFAQRSNLAKHRRGHTGERPFPCPECGKRFSQRSVLVTHQRTHTGERPYACANCGRRFSQSSHLLTHMKTHRGATAAPGSGSAPAPAPKPEAAAKGPSSAGPGERGSALLEFAGGTSFGSEHQAAFAGPSGAYREGVL.

Residues 1 to 148 (MAALHTTPDS…EEEEDEDEDD (148 aa)) are disordered. Ala-2 is subject to N-acetylalanine. Position 7 is a phosphothreonine (Thr-7). Phosphoserine is present on Ser-10. The span at 21–60 (GSECDPDQEEEEEEEEKGEEVQEVEEEEEEIVVEEEEEGV) shows a compositional bias: acidic residues. The span at 61-72 (AEVVQDAQVEAV) shows a compositional bias: low complexity. Positions 73 to 95 (AEVEVEADVEEEDVKEVLAEEEC) are enriched in acidic residues. Ser-112 is modified (phosphoserine). The segment covering 132 to 148 (EDLEEEEEEEEDEDEDD) has biased composition (acidic residues). The KRAB domain occupies 158–229 (VTFEDVAVYF…DSPRPEEGDI (72 aa)). 5 C2H2-type zinc fingers span residues 345 to 367 (TTCDVCGKVFPHRSRLAKHQRYH), 373 to 395 (FGCEECGKGFVYRSHLAIHQRTH), 401 to 423 (FPCPDCGKRFVYKSHLVTHRRIH), 429 to 451 (YRCAFCGAGFGRRSYLVTHQRTH), and 457 to 479 (YPCSHCGRSFSQSSALARHQAVH). Residues 485–512 (HCCPDCGQAFRLRADFQRHRRGGGCAEA) form a C2H2-type 6; degenerate zinc finger. Residues 508–574 (GCAEAGGDGP…TPSGKVDPAP (67 aa)) are disordered. Positions 531 to 557 (EDTDPGPEGSEVGEADGEAEAAAEERE) are enriched in acidic residues. C2H2-type zinc fingers lie at residues 691–713 (WICSDCGKTFGRRAALAKHQRYH), 719–741 (HRCADCGKSFVYGSHLARHRRTH), 747–769 (FPCPECGARFARGSHLAAHVRGH), 775–797 (FVCGVCGAGFSRRAHLTAHGRAH), and 803–825 (YACGECGRRFGQSAALTRHQWAH). A Glycyl lysine isopeptide (Lys-Gly) (interchain with G-Cter in SUMO2) cross-link involves residue Lys-829. 4 C2H2-type zinc fingers span residues 831–853 (HRCPDCGKGFGHSSDFKRHRRTH), 859–881 (FRCADCGRGFAQRSNLAKHRRGH), 887–909 (FPCPECGKRFSQRSVLVTHQRTH), and 915–937 (YACANCGRRFSQSSHLLTHMKTH). Residues 936-976 (THRGATAAPGSGSAPAPAPKPEAAAKGPSSAGPGERGSALL) are disordered. The span at 939 to 968 (GATAAPGSGSAPAPAPKPEAAAKGPSSAGP) shows a compositional bias: low complexity. A Glycyl lysine isopeptide (Lys-Gly) (interchain with G-Cter in SUMO2) cross-link involves residue Lys-955.

This sequence belongs to the krueppel C2H2-type zinc-finger protein family.

The protein resides in the nucleus. Its function is as follows. May be involved in transcriptional regulation. This chain is Zinc finger protein 316 (ZNF316), found in Homo sapiens (Human).